Here is a 520-residue protein sequence, read N- to C-terminus: Cytochrome P450 734A1 (520 aa).

The helical transmembrane segment at 13–33 threads the bilayer; that stretch reads VLVLSVILSLVIVKGMSLLWW. Cys463 is a binding site for heme.

It belongs to the cytochrome P450 family. It depends on heme as a cofactor.

Its subcellular location is the membrane. Functionally, cytochrome P450 involved in brassinosteroids (BRs) inactivation and regulation of BRs homeostasis. Inactivates the BRs castasterone (CS) and brassinolide (BL) through carbon 26 hydroxylation. Acts in association with CYP72C1 to inactivate BRs and modulate photomorphogenesis. In Arabidopsis thaliana (Mouse-ear cress), this protein is Cytochrome P450 734A1 (CYP734A1).